We begin with the raw amino-acid sequence, 623 residues long: Probable lysophospholipase 5 (623 aa).

The N-terminal stretch at 1-19 is a signal peptide; sequence MKLSSFGLFLALQLLPALG. A PLA2c domain is found at 67–607; sequence ACPSGSLLRP…NQYCWNGTIA (541 aa). N-linked (GlcNAc...) asparagine glycans are attached at residues N118, N153, N187, N232, N256, N264, N293, N331, N360, N367, N400, N403, N474, N508, N513, N537, N564, N586, and N603.

This sequence belongs to the lysophospholipase family.

Its subcellular location is the secreted. The enzyme catalyses a 1-acyl-sn-glycero-3-phosphocholine + H2O = sn-glycerol 3-phosphocholine + a fatty acid + H(+). Its function is as follows. Catalyzes the release of fatty acids from lysophospholipids. This Schizosaccharomyces pombe (strain 972 / ATCC 24843) (Fission yeast) protein is Probable lysophospholipase 5 (plb5).